Here is a 325-residue protein sequence, read N- to C-terminus: NADH-quinone oxidoreductase subunit H (325 aa).

Transmembrane regions (helical) follow at residues 11–31 (VLIAVLKAVVILVVVVVCGAL), 81–101 (MIFTLAPVIGFVSLLLAFAIV), 114–134 (IGILFFMMMAGLAVYAVLFAG), 149–169 (ASAQTLSYEVFIGLSFMGVVA), 186–206 (MWNVIPQFFGFLTFAIAGVAV), 237–257 (FFVGEYIGIVTVSALIVTMFF), 265–285 (LPPFVWFALKTAFFMVMFILI), and 304–324 (ICLPLTLLNLLATAAVILYNA).

It belongs to the complex I subunit 1 family. In terms of assembly, NDH-1 is composed of 13 different subunits. Subunits NuoA, H, J, K, L, M, N constitute the membrane sector of the complex.

The protein localises to the cell inner membrane. The enzyme catalyses a quinone + NADH + 5 H(+)(in) = a quinol + NAD(+) + 4 H(+)(out). In terms of biological role, NDH-1 shuttles electrons from NADH, via FMN and iron-sulfur (Fe-S) centers, to quinones in the respiratory chain. The immediate electron acceptor for the enzyme in this species is believed to be ubiquinone. Couples the redox reaction to proton translocation (for every two electrons transferred, four hydrogen ions are translocated across the cytoplasmic membrane), and thus conserves the redox energy in a proton gradient. This subunit may bind ubiquinone. This chain is NADH-quinone oxidoreductase subunit H, found in Photorhabdus laumondii subsp. laumondii (strain DSM 15139 / CIP 105565 / TT01) (Photorhabdus luminescens subsp. laumondii).